Consider the following 136-residue polypeptide: Immunoglobulin J chain (136 aa).

3 disulfides stabilise this stretch: Cys-12-Cys-100, Cys-71-Cys-91, and Cys-108-Cys-133. N-linked (GlcNAc...) (complex) asparagine glycosylation occurs at Asn-48.

As to quaternary structure, part of the secretory IgA (sIgA) complex that consists of two, four or five IgA monomers, and two additional non-Ig polypeptides, namely the JCHAIN and the secretory component (the proteolytic product of PIGR). Part of the secretory IgM (sIgM) complex that consist of five IgM monomers, and two additional non-Ig polypeptides, namely the JCHAIN and the secretory component (the proteolytic product of PIGR). JCHAIN-containing IgM interacts (via CH4 domain) with FCRM (via Ig-like domain).

It is found in the secreted. Functionally, serves to link two monomer units of either IgM or IgA. In the case of IgM, the J chain-joined dimer is a nucleating unit for the IgM pentamer, and in the case of IgA it induces dimers and/or larger polymers. It also helps to bind these immunoglobulins to secretory component. This is Immunoglobulin J chain from Oryctolagus cuniculus (Rabbit).